A 461-amino-acid polypeptide reads, in one-letter code: MTALFQQLPSVDKILKTSQGSQLITEFGHTAVVAICRELLTQARQFIKKNNQLPEYFSNFDRTFVEIHSRLQKQNQVQIKAVHNLTGTVLHTNLGRALWSEAAQQAALSVMQKNVSLEYDLDEGKRSHRDNYISELLCKLTGAEAACIVNNNAAAVLLMLATFAQGKEVIISRGELIEIGGAFRIPDIMEQAGCHLVEVGTTNRTHLKDYRNAITENTAFLMKVHSSNYQICGFTSSVSEEELAELGREMNVPVVTDLGSGALIDLSQYGLPKESTVQEKVAQGVGLVSFSGDKLLGGVQAGIIVGKKEWIEQLQAHPLKRALRCDKVILAGLEATLRLYLNPEKLTEKLPTLYLLTQPLKQLKINAMRLKERLESRLNSQFDIQIEASQAQIGSGSQPMERIPSVAVTIAEKTNVKLSALSARFKQLSQPIIGRMENGKIWLDLRSLAAIETLLNTLDEL.

K294 bears the N6-(pyridoxal phosphate)lysine mark.

It belongs to the SelA family. Pyridoxal 5'-phosphate is required as a cofactor.

The protein localises to the cytoplasm. The catalysed reaction is L-seryl-tRNA(Sec) + selenophosphate + H(+) = L-selenocysteinyl-tRNA(Sec) + phosphate. It functions in the pathway aminoacyl-tRNA biosynthesis; selenocysteinyl-tRNA(Sec) biosynthesis; selenocysteinyl-tRNA(Sec) from L-seryl-tRNA(Sec) (bacterial route): step 1/1. In terms of biological role, converts seryl-tRNA(Sec) to selenocysteinyl-tRNA(Sec) required for selenoprotein biosynthesis. The chain is L-seryl-tRNA(Sec) selenium transferase from Haemophilus influenzae (strain PittEE).